The chain runs to 431 residues: Enolase (431 aa).

Residue Gln167 coordinates (2R)-2-phosphoglycerate. Catalysis depends on Glu209, which acts as the Proton donor. Residues Asp246, Glu289, and Asp316 each contribute to the Mg(2+) site. 4 residues coordinate (2R)-2-phosphoglycerate: Lys341, Arg370, Ser371, and Lys392. The Proton acceptor role is filled by Lys341.

The protein belongs to the enolase family. Component of the RNA degradosome, a multiprotein complex involved in RNA processing and mRNA degradation. Mg(2+) serves as cofactor.

Its subcellular location is the cytoplasm. The protein localises to the secreted. It is found in the cell surface. The catalysed reaction is (2R)-2-phosphoglycerate = phosphoenolpyruvate + H2O. The protein operates within carbohydrate degradation; glycolysis; pyruvate from D-glyceraldehyde 3-phosphate: step 4/5. Catalyzes the reversible conversion of 2-phosphoglycerate (2-PG) into phosphoenolpyruvate (PEP). It is essential for the degradation of carbohydrates via glycolysis. In Shewanella oneidensis (strain ATCC 700550 / JCM 31522 / CIP 106686 / LMG 19005 / NCIMB 14063 / MR-1), this protein is Enolase.